Here is a 643-residue protein sequence, read N- to C-terminus: Replication protein E1 (643 aa).

Residues 28 to 58 (THGQRQVSSDEDEDETETGEDLDFIDNRVPG) form a disordered region. Over residues 36-51 (SDEDEDETETGEDLDF) the composition is skewed to acidic residues. The Nuclear localization signal motif lies at 84–86 (KRK). A phosphoserine; by host mark is found at serine 90 and serine 103. Residues 102–111 (LSPRLDAISL) carry the Nuclear export signal motif. Disordered regions lie at residues 119–138 (KRRL…TQMV) and 143–181 (EEVT…PQSG). The interval 180–346 (SGTDAAGSVL…QTLVGHSMED (167 aa)) is DNA-binding region. The region spanning 445-595 (VEFVSFLAAF…FPFASPGEPL (151 aa)) is the SF3 helicase domain. 471 to 478 (GPADTGKS) contacts ATP. Lysine 552 is covalently cross-linked (Glycyl lysine isopeptide (Lys-Gly) (interchain with G-Cter in SUMO)). A disordered region spans residues 617–643 (NSPEEQDDNGNTGEPFRCVPGDVARTV).

The protein belongs to the papillomaviridae E1 protein family. Can form hexamers. Interacts with E2 protein; this interaction increases E1 DNA binding specificity. Interacts with host DNA polymerase subunit POLA2. Interacts with host single stranded DNA-binding protein RPA1. Interacts with host TOP1; this interaction stimulates the enzymatic activity of TOP1. In terms of processing, phosphorylated. Post-translationally, sumoylated.

It localises to the host nucleus. It carries out the reaction Couples ATP hydrolysis with the unwinding of duplex DNA by translocating in the 3'-5' direction.. The catalysed reaction is ATP + H2O = ADP + phosphate + H(+). Its function is as follows. ATP-dependent DNA 3'-5' helicase required for initiation of viral DNA replication. It forms a complex with the viral E2 protein. The E1-E2 complex binds to the replication origin which contains binding sites for both proteins. During the initial step, a dimer of E1 interacts with a dimer of protein E2 leading to a complex that binds the viral origin of replication with high specificity. Then, a second dimer of E1 displaces the E2 dimer in an ATP-dependent manner to form the E1 tetramer. Following this, two E1 monomers are added to each half of the site, which results in the formation of two E1 trimers on the viral ori. Subsequently, two hexamers will be created. The double hexamer acts as a bi-directional helicase machinery and unwinds the viral DNA and then recruits the host DNA polymerase to start replication. This Human papillomavirus type 2a protein is Replication protein E1.